The following is a 222-amino-acid chain: N-(5'-phosphoribosyl)anthranilate isomerase (222 aa).

It belongs to the TrpF family.

The enzyme catalyses N-(5-phospho-beta-D-ribosyl)anthranilate = 1-(2-carboxyphenylamino)-1-deoxy-D-ribulose 5-phosphate. It participates in amino-acid biosynthesis; L-tryptophan biosynthesis; L-tryptophan from chorismate: step 3/5. The chain is N-(5'-phosphoribosyl)anthranilate isomerase from Brucella abortus (strain S19).